The primary structure comprises 466 residues: 3-isopropylmalate dehydratase large subunit (466 aa).

The [4Fe-4S] cluster site is built by cysteine 347, cysteine 407, and cysteine 410.

This sequence belongs to the aconitase/IPM isomerase family. LeuC type 1 subfamily. Heterodimer of LeuC and LeuD. [4Fe-4S] cluster serves as cofactor.

The enzyme catalyses (2R,3S)-3-isopropylmalate = (2S)-2-isopropylmalate. Its pathway is amino-acid biosynthesis; L-leucine biosynthesis; L-leucine from 3-methyl-2-oxobutanoate: step 2/4. In terms of biological role, catalyzes the isomerization between 2-isopropylmalate and 3-isopropylmalate, via the formation of 2-isopropylmaleate. In Blochmanniella pennsylvanica (strain BPEN), this protein is 3-isopropylmalate dehydratase large subunit.